Here is a 107-residue protein sequence, read N- to C-terminus: Iron-binding protein IscA (107 aa).

Fe cation-binding residues include C35, C99, and C101.

The protein belongs to the HesB/IscA family. As to quaternary structure, homodimer; may form tetramers and higher multimers. Fe cation is required as a cofactor.

Functionally, is able to transfer iron-sulfur clusters to apo-ferredoxin. Multiple cycles of [2Fe2S] cluster formation and transfer are observed, suggesting that IscA acts catalytically. Recruits intracellular free iron so as to provide iron for the assembly of transient iron-sulfur cluster in IscU in the presence of IscS, L-cysteine and the thioredoxin reductase system TrxA/TrxB. This is Iron-binding protein IscA from Photorhabdus laumondii subsp. laumondii (strain DSM 15139 / CIP 105565 / TT01) (Photorhabdus luminescens subsp. laumondii).